The following is an 881-amino-acid chain: Alanine--tRNA ligase (881 aa).

This sequence belongs to the class-II aminoacyl-tRNA synthetase family.

It is found in the cytoplasm. It carries out the reaction tRNA(Ala) + L-alanine + ATP = L-alanyl-tRNA(Ala) + AMP + diphosphate. Functionally, catalyzes the attachment of alanine to tRNA(Ala) in a two-step reaction: alanine is first activated by ATP to form Ala-AMP and then transferred to the acceptor end of tRNA(Ala). Also edits incorrectly charged Ser-tRNA(Ala) and Gly-tRNA(Ala) via its editing domain. The sequence is that of Alanine--tRNA ligase (alaS) from Lacticaseibacillus paracasei (strain ATCC 334 / BCRC 17002 / CCUG 31169 / CIP 107868 / KCTC 3260 / NRRL B-441) (Lactobacillus paracasei).